The primary structure comprises 20 residues: Brevinin-1T (20 aa).

Cysteine 14 and cysteine 20 are disulfide-bonded.

It belongs to the frog skin active peptide (FSAP) family. Brevinin subfamily. In terms of tissue distribution, expressed by the skin glands.

The protein localises to the secreted. Antibacterial activity against representative Gram-negative and Gram-positive bacteria and exhibits a very high hemolytic activity. This is Brevinin-1T from Rana temporaria (European common frog).